Consider the following 97-residue polypeptide: Large ribosomal subunit protein bL31 (97 aa).

The interval 75-97 is disordered; that stretch reads NKTKKSNQAKVEKQTRHRSINEL. Residues 84–97 show a composition bias toward basic and acidic residues; the sequence is KVEKQTRHRSINEL.

The protein belongs to the bacterial ribosomal protein bL31 family. Type A subfamily. As to quaternary structure, part of the 50S ribosomal subunit.

In terms of biological role, binds the 23S rRNA. The protein is Large ribosomal subunit protein bL31 of Mycoplasma genitalium (strain ATCC 33530 / DSM 19775 / NCTC 10195 / G37) (Mycoplasmoides genitalium).